We begin with the raw amino-acid sequence, 604 residues long: Serine/threonine-protein kinase A-Raf (604 aa).

The RBD domain occupies 19–91 (GTVKVYLPNK…DGEELIVEVL (73 aa)). The Phorbol-ester/DAG-type zinc-finger motif lies at 98–144 (MHNFVRKTFFSLAFCDFCLKFLFHGFRCQTCGYKFHQHCSSKVPTVC). 8 residues coordinate Zn(2+): His-99, Cys-112, Cys-115, Cys-125, Cys-128, His-133, Cys-136, and Cys-144. A phosphoserine mark is found at Ser-157 and Ser-162. 2 disordered regions span residues 178-222 (ELLT…HMVS) and 241-287 (TDAA…DEKK). Position 181 is a phosphothreonine (Thr-181). Residue Ser-186 is modified to Phosphoserine. Positions 210-222 (IRSTSTPNVHMVS) are enriched in polar residues. Low complexity predominate over residues 252–265 (PRGSPSPASVSSGR). A phosphoserine mark is found at Ser-255 and Ser-267. Residues 272 to 287 (LPAEQRERKSLADEKK) show a composition bias toward basic and acidic residues. The Protein kinase domain occupies 308–568 (VQLLKRIGTG…PQILATIELL (261 aa)). Residues 314 to 322 (IGTGSFGTV) and Lys-334 each bind ATP. The residue at position 316 (Thr-316) is a Phosphothreonine. Asp-427 functions as the Proton acceptor in the catalytic mechanism.

The protein belongs to the protein kinase superfamily. TKL Ser/Thr protein kinase family. RAF subfamily. Interacts with TH1L/NELFD. It depends on Zn(2+) as a cofactor. Post-translationally, dephosphorylation by the SHOC2-MRAS-PP1c (SMP) complex consisting of SHOC2, GTP-bound M-Ras/MRAS and the catalytic subunit of protein phosphatase 1 (PPP1CA, PPP1CB or PPP1CC); this relieves inactivation and stimulates kinase activity.

The enzyme catalyses L-seryl-[protein] + ATP = O-phospho-L-seryl-[protein] + ADP + H(+). It catalyses the reaction L-threonyl-[protein] + ATP = O-phospho-L-threonyl-[protein] + ADP + H(+). Its function is as follows. Involved in the transduction of mitogenic signals from the cell membrane to the nucleus. May also regulate the TOR signaling cascade. Phosphorylates PFKFB2. In Rattus norvegicus (Rat), this protein is Serine/threonine-protein kinase A-Raf (Araf).